A 259-amino-acid polypeptide reads, in one-letter code: L-ornithine N(alpha)-acyltransferase (259 aa).

The protein belongs to the acetyltransferase family. OlsB subfamily.

It carries out the reaction a (3R)-hydroxyacyl-[ACP] + L-ornithine = a lyso-ornithine lipid + holo-[ACP] + H(+). It participates in lipid metabolism. Its function is as follows. Catalyzes the first step in the biosynthesis of ornithine lipids, which are phosphorus-free membrane lipids. Catalyzes the 3-hydroxyacyl-acyl carrier protein-dependent acylation of ornithine to form lyso-ornithine lipid (LOL). This is L-ornithine N(alpha)-acyltransferase from Rhodobacter capsulatus (strain ATCC BAA-309 / NBRC 16581 / SB1003).